We begin with the raw amino-acid sequence, 500 residues long: Pyridine nucleotide-disulfide oxidoreductase domain-containing protein 1 (500 aa).

N-acetylmethionine is present on methionine 1.

It belongs to the class-I pyridine nucleotide-disulfide oxidoreductase family. PYROXD1 subfamily. FAD is required as a cofactor.

The protein localises to the nucleus. It localises to the cytoplasm. The protein resides in the myofibril. Its subcellular location is the sarcomere. In terms of biological role, probable FAD-dependent oxidoreductase; involved in the cellular oxidative stress response. Required for normal sarcomere structure and muscle fiber integrity. This Pongo abelii (Sumatran orangutan) protein is Pyridine nucleotide-disulfide oxidoreductase domain-containing protein 1 (PYROXD1).